We begin with the raw amino-acid sequence, 373 residues long: Probable neutral protease 2 homolog MCYG_05201 (373 aa).

The N-terminal stretch at 1–19 (MQFFTALAAVGALVAPALA) is a signal peptide. Positions 20–187 (LPTQVPANQS…AHIVGTIDKR (168 aa)) are excised as a propeptide. Cystine bridges form between cysteine 195-cysteine 265 and cysteine 272-cysteine 290. Histidine 314 lines the Zn(2+) pocket. Glutamate 315 is a catalytic residue. Histidine 318 and aspartate 329 together coordinate Zn(2+).

The protein belongs to the peptidase M35 family. It depends on Zn(2+) as a cofactor.

It is found in the secreted. It carries out the reaction Preferential cleavage of bonds with hydrophobic residues in P1'. Also 3-Asn-|-Gln-4 and 8-Gly-|-Ser-9 bonds in insulin B chain.. Probable secreted metalloprotease that shows high activities on basic nuclear substrates such as histone and protamine. May be involved in virulence. The sequence is that of Probable neutral protease 2 homolog MCYG_05201 from Arthroderma otae (strain ATCC MYA-4605 / CBS 113480) (Microsporum canis).